Here is a 673-residue protein sequence, read N- to C-terminus: DNA ligase (673 aa).

NAD(+) contacts are provided by residues 34 to 38 (DAEYD), 83 to 84 (SL), and Glu116. Lys118 serves as the catalytic N6-AMP-lysine intermediate. The NAD(+) site is built by Arg139, Glu176, Lys293, and Lys317. Zn(2+)-binding residues include Cys411, Cys414, Cys429, and Cys435. The BRCT domain maps to 595–673 (NQQNPFFGKT…EDEFLKWVNS (79 aa)).

This sequence belongs to the NAD-dependent DNA ligase family. LigA subfamily. The cofactor is Mg(2+). Mn(2+) serves as cofactor.

The catalysed reaction is NAD(+) + (deoxyribonucleotide)n-3'-hydroxyl + 5'-phospho-(deoxyribonucleotide)m = (deoxyribonucleotide)n+m + AMP + beta-nicotinamide D-nucleotide.. In terms of biological role, DNA ligase that catalyzes the formation of phosphodiester linkages between 5'-phosphoryl and 3'-hydroxyl groups in double-stranded DNA using NAD as a coenzyme and as the energy source for the reaction. It is essential for DNA replication and repair of damaged DNA. In Legionella pneumophila (strain Corby), this protein is DNA ligase.